The sequence spans 146 residues: D-aminoacyl-tRNA deacylase (146 aa).

Residues 138–139 (GP) carry the Gly-cisPro motif, important for rejection of L-amino acids motif.

This sequence belongs to the DTD family. As to quaternary structure, homodimer.

It is found in the cytoplasm. It catalyses the reaction glycyl-tRNA(Ala) + H2O = tRNA(Ala) + glycine + H(+). It carries out the reaction a D-aminoacyl-tRNA + H2O = a tRNA + a D-alpha-amino acid + H(+). Functionally, an aminoacyl-tRNA editing enzyme that deacylates mischarged D-aminoacyl-tRNAs. Also deacylates mischarged glycyl-tRNA(Ala), protecting cells against glycine mischarging by AlaRS. Acts via tRNA-based rather than protein-based catalysis; rejects L-amino acids rather than detecting D-amino acids in the active site. By recycling D-aminoacyl-tRNA to D-amino acids and free tRNA molecules, this enzyme counteracts the toxicity associated with the formation of D-aminoacyl-tRNA entities in vivo and helps enforce protein L-homochirality. The protein is D-aminoacyl-tRNA deacylase of Tolumonas auensis (strain DSM 9187 / NBRC 110442 / TA 4).